We begin with the raw amino-acid sequence, 117 residues long: uncharacterized protein (117 aa).

The chain crosses the membrane as a helical span at residues 76-96 (FIMSSGCFLIASLSCVGLTVF).

Its subcellular location is the membrane. This is an uncharacterized protein from Saccharomyces cerevisiae (strain ATCC 204508 / S288c) (Baker's yeast).